A 295-amino-acid polypeptide reads, in one-letter code: MPYQQITINVNDAVAERLADALMEHGALSAAIEDAYAGTQNEQAIFGEPGMPAEQIWQQSKVIALFGEHDEAAAIIQIAAQECGLKDLAYTGETIEDQDWVRLTQSQFDPIRISDRLWITPSWHEAPEGTAVNLRLDPGLAFGTGSHPTTRLCLKWLDTQLKNGESVLDYGCGSGILTIAALKLGAGSAVGVDIDEQAVRAGKDNAEQNNVDAQFFLPDGLPQGQFDVVVANILANPLRMLGEMLAARTKQGGRIVLSGLLDEQAEELGGIYSQWFDLDPAETEEGWARLSGTKR.

Residues Thr150, Gly171, Asp193, and Asn232 each contribute to the S-adenosyl-L-methionine site.

The protein belongs to the methyltransferase superfamily. PrmA family.

It localises to the cytoplasm. It carries out the reaction L-lysyl-[protein] + 3 S-adenosyl-L-methionine = N(6),N(6),N(6)-trimethyl-L-lysyl-[protein] + 3 S-adenosyl-L-homocysteine + 3 H(+). In terms of biological role, methylates ribosomal protein L11. The sequence is that of Ribosomal protein L11 methyltransferase from Neisseria meningitidis serogroup C / serotype 2a (strain ATCC 700532 / DSM 15464 / FAM18).